A 251-amino-acid polypeptide reads, in one-letter code: 2,3-bisphosphoglycerate-dependent phosphoglycerate mutase (251 aa).

Residues arginine 8–asparagine 15, threonine 21–glycine 22, arginine 60, glutamate 87–tyrosine 90, lysine 98, arginine 114–arginine 115, and glycine 183–asparagine 184 contribute to the substrate site. Residue histidine 9 is the Tele-phosphohistidine intermediate of the active site. Glutamate 87 serves as the catalytic Proton donor/acceptor.

The protein belongs to the phosphoglycerate mutase family. BPG-dependent PGAM subfamily.

It carries out the reaction (2R)-2-phosphoglycerate = (2R)-3-phosphoglycerate. It participates in carbohydrate degradation; glycolysis; pyruvate from D-glyceraldehyde 3-phosphate: step 3/5. Functionally, catalyzes the interconversion of 2-phosphoglycerate and 3-phosphoglycerate. The sequence is that of 2,3-bisphosphoglycerate-dependent phosphoglycerate mutase from Thermoanaerobacter sp. (strain X514).